The following is a 245-amino-acid chain: Small ribosomal subunit protein uS3 (245 aa).

The KH type-2 domain maps to 39-107; that stretch reads IRKAIREKLK…EVRVNLVEIR (69 aa). The tract at residues 216-245 is disordered; the sequence is DKRLETSGQSRARANTNQRGPASGAQAAGA. Polar residues predominate over residues 221 to 235; that stretch reads TSGQSRARANTNQRG.

This sequence belongs to the universal ribosomal protein uS3 family. In terms of assembly, part of the 30S ribosomal subunit. Forms a tight complex with proteins S10 and S14.

Functionally, binds the lower part of the 30S subunit head. Binds mRNA in the 70S ribosome, positioning it for translation. In Hyphomonas neptunium (strain ATCC 15444), this protein is Small ribosomal subunit protein uS3.